A 205-amino-acid chain; its full sequence is Probable peptidyl-tRNA hydrolase 2 (205 aa).

The span at 40–49 shows a compositional bias: polar residues; it reads YSSKNANKAS. The interval 40–68 is disordered; the sequence is YSSKNANKASNPEKESPVSVSNDEDSESE. Ser65 and Ser79 each carry phosphoserine.

It belongs to the PTH2 family.

It catalyses the reaction an N-acyl-L-alpha-aminoacyl-tRNA + H2O = an N-acyl-L-amino acid + a tRNA + H(+). Its function is as follows. The natural substrate for this enzyme may be peptidyl-tRNAs which drop off the ribosome during protein synthesis. This chain is Probable peptidyl-tRNA hydrolase 2, found in Schizosaccharomyces pombe (strain 972 / ATCC 24843) (Fission yeast).